Here is a 1381-residue protein sequence, read N- to C-terminus: EH domain-containing and endocytosis protein 1 (1381 aa).

EH domains follow at residues 14–113 and 135–227; these read EQAF…NPAP and DIAK…IRLE. EF-hand domains lie at 47 to 82 and 167 to 202; these read LPGQ…IAQL and LPNQ…IQLC. Residues Asp180, Asp182, Ser184, and Glu191 each coordinate Ca(2+). A Phosphothreonine modification is found at Thr238. 2 positions are modified to phosphoserine: Ser241 and Ser244. Thr245 bears the Phosphothreonine mark. Phosphoserine occurs at positions 248 and 249. A Phosphothreonine modification is found at Thr251. Ser265 carries the post-translational modification Phosphoserine. One can recognise an EF-hand 3 domain in the interval 276-311; the sequence is EKKQQFDAIFDSLDKQHAGSLSSAVLVPFFLSSRLN. Residues 277 to 366 enclose the EH 3 domain; the sequence is KKQQFDAIFD…NELLQSPALG (90 aa). Residues 389–535 form a disordered region; the sequence is SKPSLQDMPH…SSPVKRTAST (147 aa). Composition is skewed to polar residues over residues 404-424 and 432-447; these read AVNT…NGSL and PSFS…TVVQ. Ser419 is modified (phosphoserine). The span at 448 to 470 shows a compositional bias: low complexity; the sequence is NNTNNSFSYDNNNGQATLQQQQP. Phosphothreonine occurs at positions 450, 477, and 487. Residues 477-494 show a composition bias toward polar residues; it reads THSSSGLKKFTPTSNFGQ. Ser495 carries the phosphoserine modification. The stretch at 593–882 forms a coiled coil; sequence GEASAQLSNA…RELSERQMNL (290 aa). Lys674 is covalently cross-linked (Glycyl lysine isopeptide (Lys-Gly) (interchain with G-Cter in ubiquitin)). The residue at position 848 (Ser848) is a Phosphoserine. Residues 898 to 919 form a disordered region; that stretch reads SASNTDTTTKEATSRGNVHEDT. A compositionally biased stretch (basic and acidic residues) spans 905-919; sequence TTKEATSRGNVHEDT. 6 positions are modified to phosphoserine: Ser931, Ser950, Ser964, Ser1008, Ser1012, and Ser1020. Disordered regions lie at residues 933 to 1202, 1214 to 1285, and 1298 to 1322; these read LNVN…KDEF, VEED…QVSN, and SKAE…NDPI. The span at 937–957 shows a compositional bias: basic and acidic residues; sequence RVKDDEEKTERTESDVFDRDV. Composition is skewed to polar residues over residues 960-989 and 1005-1019; these read LGSQ…LTET and RSQS…NAPQ. Basic and acidic residues predominate over residues 1021–1036; it reads VRDDVELPETLEERDT. 2 stretches are compositionally biased toward polar residues: residues 1037–1049 and 1061–1073; these read INNT…TGNL and ATAS…NETT. A Phosphothreonine modification is found at Thr1046. Ser1069, Ser1087, Ser1093, Ser1095, Ser1096, and Ser1100 each carry phosphoserine. Positions 1093–1103 are enriched in polar residues; sequence SVSSIQESPKI. The residue at position 1111 (Thr1111) is a Phosphothreonine. Over residues 1127–1139 the composition is skewed to acidic residues; it reads SDSSSSDDDEFED. 2 stretches are compositionally biased toward polar residues: residues 1147 to 1164 and 1178 to 1195; these read TVKT…SSLE and TSPS…TNSI. A phosphoserine mark is found at Ser1181 and Ser1187. The span at 1214–1226 shows a compositional bias: acidic residues; sequence VEEDNGADSESEF. The able to bind biological membranes stretch occupies residues 1217–1381; the sequence is DNGADSESEF…AATNFLLDSA (165 aa). The segment covering 1253 to 1285 has biased composition (polar residues); that stretch reads NAFTGTLTSSSNPTIPKPQVQQQSTSDPAQVSN. Residue Thr1307 is modified to Phosphothreonine. Lys1329 is covalently cross-linked (Glycyl lysine isopeptide (Lys-Gly) (interchain with G-Cter in ubiquitin)). The UBA domain maps to 1338–1380; it reads ATTPKSLAVEELSGMGFTEEEAHNALEKCNWDLEAATNFLLDS. At Ser1343 the chain carries Phosphoserine.

The protein belongs to the VDP/USO1/EDE1 family. In terms of assembly, interacts (via UBA domain) with monoubiquitin and ENT1 (via asparagine-proline-phenylalanine tripeptide motif called NPF). Interacts with PAL1 and SYP1.

The protein resides in the cytoplasm. Functions at the internalization step of the clathrin-mediated endocytosis (CME) as an early-acting scaffold protein. Requires clathrin adapter proteins, ENT1/2 and YAP1801/2, for normal spatiotemporal dynamics and viability. Binds to biological membranes in a ubiquitin-dependent manner. This Saccharomyces cerevisiae (strain ATCC 204508 / S288c) (Baker's yeast) protein is EH domain-containing and endocytosis protein 1 (EDE1).